The primary structure comprises 87 residues: ParB-like nuclease domain-containing protein YnaK (87 aa).

The chain is ParB-like nuclease domain-containing protein YnaK (ynaK) from Escherichia coli (strain K12).